Consider the following 398-residue polypeptide: Ornithine aminotransferase (398 aa).

Residue Lys-255 is modified to N6-(pyridoxal phosphate)lysine.

It belongs to the class-III pyridoxal-phosphate-dependent aminotransferase family. OAT subfamily. Pyridoxal 5'-phosphate serves as cofactor.

It localises to the cytoplasm. The enzyme catalyses a 2-oxocarboxylate + L-ornithine = L-glutamate 5-semialdehyde + an L-alpha-amino acid. Its pathway is amino-acid biosynthesis; L-proline biosynthesis; L-glutamate 5-semialdehyde from L-ornithine: step 1/1. Functionally, catalyzes the interconversion of ornithine to glutamate semialdehyde. The polypeptide is Ornithine aminotransferase (Geobacillus sp. (strain WCH70)).